A 393-amino-acid chain; its full sequence is Fractalkine (393 aa).

The N-terminal stretch at 1 to 24 is a signal peptide; that stretch reads MAPSQLAWLLRLAAFFHLCTLLAG. Positions 25 to 100 are chemokine and involved in interaction with ITGAV:ITGB3 and ITGA4:ITGB1; the sequence is QHLGMTKCNI…HQTAALTRNG (76 aa). The Extracellular portion of the chain corresponds to 25-337; sequence QHLGMTKCNI…PDSQAATRRQ (313 aa). Cystine bridges form between C32-C58 and C36-C74. Residue N33 is glycosylated (N-linked (GlcNAc...) asparagine). The mucin-like stalk stretch occupies residues 101–337; that stretch reads GKFEKRVDNV…PDSQAATRRQ (237 aa). Disordered stretches follow at residues 114-184 and 213-303; these read ITSA…PQST and EKAT…SGSQ. Composition is skewed to polar residues over residues 153–172 and 223–240; these read GTSQ…TSKA and ALST…NVGS. A helical transmembrane segment spans residues 338 to 358; the sequence is AVGLLAFLGLLFCLGVAMFAY. The Cytoplasmic portion of the chain corresponds to 359–393; it reads QSLQGCPRKMAGEMVEGLRYVPRSCGSNSYVLVPV.

Belongs to the intercrine delta family. As to quaternary structure, monomer. Forms a ternary complex with CX3CR1 and ITGAV:ITGB3 or ITGA4:ITGB1. Post-translationally, a soluble short form may be released by proteolytic cleavage from the long membrane-anchored form. In terms of tissue distribution, highest levels in brain (neurons). Significant levels in kidney, heart, lung and adrenal gland.

The protein resides in the cell membrane. It is found in the secreted. Chemokine that acts as a ligand for both CX3CR1 and integrins ITGAV:ITGB3 and ITGA4:ITGB1. The CX3CR1-CX3CL1 signaling exerts distinct functions in different tissue compartments, such as immune response, inflammation, cell adhesion and chemotaxis. Regulates leukocyte adhesion and migration processes at the endothelium. Can activate integrins in both a CX3CR1-dependent and CX3CR1-independent manner. In the presence of CX3CR1, activates integrins by binding to the classical ligand-binding site (site 1) in integrins. In the absence of CX3CR1, binds to a second site (site 2) in integrins which is distinct from site 1 and enhances the binding of other integrin ligands to site 1. In terms of biological role, the soluble form is chemotactic for T-cells and monocytes, but not for neutrophils. Its function is as follows. The membrane-bound form promotes adhesion of those leukocytes to endothelial cells. The chain is Fractalkine (Cx3cl1) from Rattus norvegicus (Rat).